A 335-amino-acid polypeptide reads, in one-letter code: Probable cytosolic iron-sulfur protein assembly protein Ciao1 (335 aa).

WD repeat units lie at residues 12-51 (GHKG…WSTK), 57-96 (GHKR…FECN), 101-140 (GHEN…EFEC), 146-185 (SHTQ…NDWD), 192-231 (SHTS…NSAG), 250-289 (QHSR…KPDE), and 301-335 (AHDQ…KVTE).

It belongs to the WD repeat CIA1 family.

Its function is as follows. Essential component of the cytosolic iron-sulfur (Fe/S) protein assembly machinery. Required for the maturation of extramitochondrial Fe/S proteins. This is Probable cytosolic iron-sulfur protein assembly protein Ciao1 from Drosophila yakuba (Fruit fly).